A 743-amino-acid chain; its full sequence is Protein will decrease acetylation (743 aa).

6 WD repeats span residues 389 to 428 (ERSRGLTSAHLDPSECHMLAGFDNSAVQLWQLNQSYCRGK), 493 to 524 (LRGHTKGVTDVRFSAHYPLMYSVSKDATMRCW), 535 to 576 (YRSH…ALII), 577 to 618 (YAGH…LMRV), 619 to 660 (FADC…QLAE), and 661 to 702 (LKDH…PMSD).

This sequence belongs to the WD repeat TAF5 family. In terms of assembly, component of the Spt-Ada-Gcn5 acetyltransferase (SAGA) complex consisting of wda/Taf5L, Saf6, Taf9, Taf10b, Taf12, Ada1, Spt3, Spt7, Spt20, Sf3b3, Sf3b5, Nipped-A/Tra1, a histone acetyltransferase (HAT) module made up of Gcn5, Ada2b (Isoform B), Ada3 and Sgf29, and a deubiquitinase (DUB) module made up of not/nonstop, Sgf11 and e(y)2 tethered to SAGA by Atxn7. Not essential for the assembly or integrity of the SAGA complex. Not a component of the Ada2a-containing ATAC complex.

It is found in the nucleus. The protein resides in the chromosome. Functionally, component of the transcription regulatory complex SAGA, a multiprotein complex that activates transcription by remodeling chromatin and mediating histone acetylation and deubiquitination. The SAGA complex predominantly acetylates histone H3. Involved in acetylation of histone H3 on 'Lys-10' (H3K9ac) by the SAGA complex in the larval central nervous system. Involved in SAGA complex coactivator functions. Required for oogenesis. This is Protein will decrease acetylation from Drosophila melanogaster (Fruit fly).